The sequence spans 759 residues: 5-methyltetrahydropteroyltriglutamate--homocysteine methyltransferase (759 aa).

Residues 17 to 20 and Lys-116 each bind 5-methyltetrahydropteroyltri-L-glutamate; that span reads RELK. Residues 430 to 432 and Glu-483 each bind L-homocysteine; that span reads IGS. L-methionine-binding positions include 430 to 432 and Glu-483; that span reads IGS. 5-methyltetrahydropteroyltri-L-glutamate is bound by residues 514–515 and Trp-560; that span reads RC. L-homocysteine is bound at residue Asp-598. Asp-598 is a binding site for L-methionine. A 5-methyltetrahydropteroyltri-L-glutamate-binding site is contributed by Glu-604. The Zn(2+) site is built by His-641, Cys-643, and Glu-665. His-694 acts as the Proton donor in catalysis. Cys-726 serves as a coordination point for Zn(2+).

This sequence belongs to the vitamin-B12 independent methionine synthase family. Zn(2+) is required as a cofactor.

The enzyme catalyses 5-methyltetrahydropteroyltri-L-glutamate + L-homocysteine = tetrahydropteroyltri-L-glutamate + L-methionine. It functions in the pathway amino-acid biosynthesis; L-methionine biosynthesis via de novo pathway; L-methionine from L-homocysteine (MetE route): step 1/1. Its function is as follows. Catalyzes the transfer of a methyl group from 5-methyltetrahydrofolate to homocysteine resulting in methionine formation. The polypeptide is 5-methyltetrahydropteroyltriglutamate--homocysteine methyltransferase (Lactococcus lactis subsp. lactis (strain IL1403) (Streptococcus lactis)).